Here is a 439-residue protein sequence, read N- to C-terminus: 3-phosphoshikimate 1-carboxyvinyltransferase (439 aa).

3-phosphoshikimate contacts are provided by lysine 25, serine 26, and arginine 30. Residue lysine 25 participates in phosphoenolpyruvate binding. Residues glycine 96 and arginine 124 each contribute to the phosphoenolpyruvate site. 3-phosphoshikimate-binding residues include serine 170, serine 171, glutamine 172, serine 202, aspartate 324, and lysine 351. Residue glutamine 172 participates in phosphoenolpyruvate binding. Aspartate 324 acts as the Proton acceptor in catalysis. Residues arginine 355, arginine 399, and lysine 424 each coordinate phosphoenolpyruvate.

The protein belongs to the EPSP synthase family. As to quaternary structure, monomer.

It localises to the cytoplasm. The enzyme catalyses 3-phosphoshikimate + phosphoenolpyruvate = 5-O-(1-carboxyvinyl)-3-phosphoshikimate + phosphate. It participates in metabolic intermediate biosynthesis; chorismate biosynthesis; chorismate from D-erythrose 4-phosphate and phosphoenolpyruvate: step 6/7. Functionally, catalyzes the transfer of the enolpyruvyl moiety of phosphoenolpyruvate (PEP) to the 5-hydroxyl of shikimate-3-phosphate (S3P) to produce enolpyruvyl shikimate-3-phosphate and inorganic phosphate. This Bordetella avium (strain 197N) protein is 3-phosphoshikimate 1-carboxyvinyltransferase.